Reading from the N-terminus, the 98-residue chain is NADH-ubiquinone oxidoreductase chain 4L (98 aa).

3 helical membrane passes run 2 to 22 (PFIY…LLLF), 30 to 50 (LLCL…TTLG), and 61 to 81 (IILM…LVTI).

It belongs to the complex I subunit 4L family. In terms of assembly, core subunit of respiratory chain NADH dehydrogenase (Complex I) which is composed of 45 different subunits.

The protein resides in the mitochondrion inner membrane. It carries out the reaction a ubiquinone + NADH + 5 H(+)(in) = a ubiquinol + NAD(+) + 4 H(+)(out). Its function is as follows. Core subunit of the mitochondrial membrane respiratory chain NADH dehydrogenase (Complex I) which catalyzes electron transfer from NADH through the respiratory chain, using ubiquinone as an electron acceptor. Part of the enzyme membrane arm which is embedded in the lipid bilayer and involved in proton translocation. This is NADH-ubiquinone oxidoreductase chain 4L (MT-ND4L) from Bradypus tridactylus (Pale-throated three-toed sloth).